We begin with the raw amino-acid sequence, 144 residues long: Universal stress protein F (144 aa).

The protein belongs to the universal stress protein A family. In terms of assembly, homodimer.

The polypeptide is Universal stress protein F (uspF) (Escherichia coli (strain K12)).